We begin with the raw amino-acid sequence, 318 residues long: MNTRGSGSSSSSSSSQASLMAFSEPPKPASQPSPPSSPMSERPPSGRSRRRAQEPGRFLGVRRRPWGRYAAEIRDPTTKERHWLGTFDTAQEAALAYDRAALSMKGAQARTNFVYTHAAYNYPPFLAPFHAPQYAAAAAAPSSVQYGGGVGAAPHIGSYGHHHHHHHHHGHGAASGASSVGECSTMPVMVPVDPHRSSMSSSLLDMDRNGHDFLFSGADDNSGYLSSVVPESCLRPRGGGAAADHQDMRRYSDADAYGMMGLREDVDDLAQMVAGFWGGGDAADQLGACGFPASGGAADMVASSQGSDSYSPFSFLSH.

The span at 1 to 15 shows a compositional bias: low complexity; the sequence is MNTRGSGSSSSSSSS. 2 disordered regions span residues 1–59 and 158–178; these read MNTR…GRFL and SYGH…SGAS. The segment covering 25–37 has biased composition (pro residues); sequence PPKPASQPSPPSS. Positions 57–114 form a DNA-binding region, AP2/ERF; sequence RFLGVRRRPWGRYAAEIRDPTTKERHWLGTFDTAQEAALAYDRAALSMKGAQARTNFV. Residues 160-171 show a composition bias toward basic residues; sequence GHHHHHHHHHGH.

This sequence belongs to the AP2/ERF transcription factor family. ERF subfamily.

The protein localises to the nucleus. Functionally, required to prevent the formation of axillary meristems within the spikelet meristem and permit the subsequent establishment of floral meristem identity. Mediates the transition from spikelet to floret meristem. Determines the transition from panicle branching to spikelet formation. May specify floral organ identity by regulating the class B genes (Agamous-like genes) MADS6 and MADS17, as well as class E genes MADS1, MADS7 and MADS8 in floral meristem. Possesses transactivation activity. The polypeptide is Ethylene-responsive transcription factor FZP (Oryza sativa subsp. japonica (Rice)).